We begin with the raw amino-acid sequence, 491 residues long: Pyruvate carboxylase subunit A (491 aa).

The region spanning 1–445 is the Biotin carboxylation domain; sequence MFSKILVANR…HTHFVDEYRR (445 aa). Residues Lys116, Glu200, and His235 each contribute to the ATP site. The ATP-grasp domain maps to 120–316; the sequence is KKLMKKAGVP…LVKEQIRVAS (197 aa). The active site involves Arg291.

In terms of assembly, heterooctamer of four A and four B subunits. The cofactor is Mg(2+). Mn(2+) serves as cofactor. It depends on Co(2+) as a cofactor.

It carries out the reaction hydrogencarbonate + pyruvate + ATP = oxaloacetate + ADP + phosphate + H(+). Its pathway is carbohydrate biosynthesis; gluconeogenesis. With respect to regulation, inhibited by ADP and alpha-ketoglutarate. Its function is as follows. Pyruvate carboxylase catalyzes a 2-step reaction, involving the ATP-dependent carboxylation of the covalently attached biotin in the first step and the transfer of the carboxyl group to pyruvate in the second. The polypeptide is Pyruvate carboxylase subunit A (pycA) (Methanothermobacter thermautotrophicus (strain ATCC 29096 / DSM 1053 / JCM 10044 / NBRC 100330 / Delta H) (Methanobacterium thermoautotrophicum)).